The chain runs to 473 residues: Photosystem II CP43 reaction center protein (473 aa).

Residues 1–14 constitute a propeptide that is removed on maturation; sequence MKTLYSLRRFYPVE. At threonine 15 the chain carries N-acetylthreonine. Threonine 15 is subject to Phosphothreonine. 5 consecutive transmembrane segments (helical) span residues 69–93, 134–155, 178–200, 255–275, and 291–312; these read LFEVAHFVPEKPMYEQGLILLPHLA, LIGPETLEESFPFFGYVWKDKN, KALYFGGVYDTWAPGGGDVRKIT, KPFAWARRAFIWSGEAYLSYS, and WFNNTAYPSEFYGPTGPEASQA. Glutamate 367 provides a ligand contact to [CaMn4O5] cluster. The helical transmembrane segment at 447 to 471 threads the bilayer; that stretch reads RARAAAAGFEKGIDRDTEPVLSMTP.

Belongs to the PsbB/PsbC family. PsbC subfamily. In terms of assembly, PSII is composed of 1 copy each of membrane proteins PsbA, PsbB, PsbC, PsbD, PsbE, PsbF, PsbH, PsbI, PsbJ, PsbK, PsbL, PsbM, PsbT, PsbX, PsbY, PsbZ, Psb30/Ycf12, at least 3 peripheral proteins of the oxygen-evolving complex and a large number of cofactors. It forms dimeric complexes. Binds multiple chlorophylls and provides some of the ligands for the Ca-4Mn-5O cluster of the oxygen-evolving complex. It may also provide a ligand for a Cl- that is required for oxygen evolution. PSII binds additional chlorophylls, carotenoids and specific lipids. serves as cofactor.

It is found in the plastid. Its subcellular location is the chloroplast thylakoid membrane. One of the components of the core complex of photosystem II (PSII). It binds chlorophyll and helps catalyze the primary light-induced photochemical processes of PSII. PSII is a light-driven water:plastoquinone oxidoreductase, using light energy to abstract electrons from H(2)O, generating O(2) and a proton gradient subsequently used for ATP formation. The protein is Photosystem II CP43 reaction center protein of Angiopteris evecta (Mule's foot fern).